Consider the following 208-residue polypeptide: Proheparin-binding EGF-like growth factor (208 aa).

Positions 1–23 are cleaved as a signal peptide; it reads MKLLPSVVLKLFLAAVFSALVTG. The propeptide occupies 24-62; it reads ESLERLRRGLADGTSNLVSPTESTDQLLPPGGGRGREVL. Residues 24 to 161 lie on the Extracellular side of the membrane; the sequence is ESLERLRRGL…NRLYTYDHTT (138 aa). The segment covering 37–49 has biased composition (polar residues); sequence TSNLVSPTESTDQ. Disordered regions lie at residues 37-57 and 81-104; these read TSNLVSPTESTDQLLPPGGGR and QALATPSKEERGKRKKKGKGLGKK. O-linked (GalNAc...) threonine glycosylation occurs at Thr85. Residues 93–102 are compositionally biased toward basic residues; it reads KRKKKGKGLG. Residues 104–144 form the EGF-like domain; sequence KRDPCLRKYKDFCIHGECKYVKELRAPSCICHPGYHGERCH. 3 cysteine pairs are disulfide-bonded: Cys108–Cys121, Cys116–Cys132, and Cys134–Cys143. Residues 149–208 constitute a propeptide, C-terminal; it reads PVKNRLYTYDHTTILAVVAVVLSSVCLLVIVGLLMFRYHRRGGYDVENEEKVKLGVTASH. A helical membrane pass occupies residues 162-182; the sequence is ILAVVAVVLSSVCLLVIVGLL. Over 183–208 the chain is Cytoplasmic; the sequence is MFRYHRRGGYDVENEEKVKLGVTASH.

Interacts with FBLN1. Interacts with EGFR and ERBB4. O-glycosylated. Macrophages, midbrain, cerebellum, hypothalamus, cerebral cortex, bulbourethral gland, lung, heart ventricle, kidney, skin, prostate, seminal vesicle, testis; at low levels in lymph node, thymus, spleen; not detected in pituitary, olfactory bulb, thyroid, duodenum, pancreas, liver, submaxillary gland.

The protein resides in the secreted. Its subcellular location is the extracellular space. It is found in the cell membrane. Growth factor that mediates its effects via EGFR, ERBB2 and ERBB4. Required for normal cardiac valve formation and normal heart function. Promotes smooth muscle cell proliferation. May be involved in macrophage-mediated cellular proliferation. It is mitogenic for fibroblasts, but not endothelial cells. It is able to bind EGF receptor/EGFR with higher affinity than EGF itself and is a far more potent mitogen for smooth muscle cells than EGF. Also acts as a diphtheria toxin receptor. This Sus scrofa (Pig) protein is Proheparin-binding EGF-like growth factor (HBEGF).